The following is a 426-amino-acid chain: Serine hydroxymethyltransferase (426 aa).

(6S)-5,6,7,8-tetrahydrofolate contacts are provided by residues Leu113 and 117–119; that span reads GHL. Lys222 carries the post-translational modification N6-(pyridoxal phosphate)lysine. (6S)-5,6,7,8-tetrahydrofolate is bound at residue 363–365; it reads SAF.

The protein belongs to the SHMT family. In terms of assembly, homodimer. The cofactor is pyridoxal 5'-phosphate.

The protein localises to the cytoplasm. It catalyses the reaction (6R)-5,10-methylene-5,6,7,8-tetrahydrofolate + glycine + H2O = (6S)-5,6,7,8-tetrahydrofolate + L-serine. It functions in the pathway one-carbon metabolism; tetrahydrofolate interconversion. The protein operates within amino-acid biosynthesis; glycine biosynthesis; glycine from L-serine: step 1/1. Its function is as follows. Catalyzes the reversible interconversion of serine and glycine with tetrahydrofolate (THF) serving as the one-carbon carrier. This reaction serves as the major source of one-carbon groups required for the biosynthesis of purines, thymidylate, methionine, and other important biomolecules. Also exhibits THF-independent aldolase activity toward beta-hydroxyamino acids, producing glycine and aldehydes, via a retro-aldol mechanism. The chain is Serine hydroxymethyltransferase from Bacteroides thetaiotaomicron (strain ATCC 29148 / DSM 2079 / JCM 5827 / CCUG 10774 / NCTC 10582 / VPI-5482 / E50).